The following is an 827-amino-acid chain: Zinc phosphodiesterase ELAC protein 2 (827 aa).

A mitochondrion-targeting transit peptide spans 1–16 (MWALRSLLRPLGLRTM). Disordered stretches follow at residues 15–46 (TMSQ…GWGP) and 181–220 (SERR…QCLP). The segment covering 181-192 (SERRCGEQEPSR) has biased composition (basic and acidic residues). 6 positions are modified to phosphoserine: S193, S197, S202, S207, S617, and S735. Residues 199–210 (NRLSPKQSSSDP) are compositionally biased toward polar residues. The segment at 794 to 827 (LTQQADSSEDREPHQKRAHSEEPHSPQSKKVRAQ) is disordered. The residue at position 795 (T795) is a Phosphothreonine. A Phosphoserine modification is found at S800. Residues 801-817 (SEDREPHQKRAHSEEPH) are compositionally biased toward basic and acidic residues. The residue at position 818 (S818) is a Phosphoserine.

This sequence belongs to the RNase Z family. In terms of assembly, homodimer. Interacts with PTCD1. Requires Zn(2+) as cofactor.

The protein resides in the mitochondrion. The protein localises to the mitochondrion matrix. It localises to the mitochondrion nucleoid. Its subcellular location is the nucleus. The enzyme catalyses Endonucleolytic cleavage of RNA, removing extra 3' nucleotides from tRNA precursor, generating 3' termini of tRNAs. A 3'-hydroxy group is left at the tRNA terminus and a 5'-phosphoryl group is left at the trailer molecule.. In terms of biological role, zinc phosphodiesterase, which displays mitochondrial tRNA 3'-processing endonuclease activity. Involved in tRNA maturation, by removing a 3'-trailer from precursor tRNA. Associates with mitochondrial DNA complexes at the nucleoids to initiate RNA processing and ribosome assembly. This chain is Zinc phosphodiesterase ELAC protein 2 (Elac2), found in Rattus norvegicus (Rat).